Reading from the N-terminus, the 692-residue chain is Elongation factor G (692 aa).

Positions D8 to L283 constitute a tr-type G domain. GTP is bound by residues A17–T24, D81–H85, and N135–D138.

The protein belongs to the TRAFAC class translation factor GTPase superfamily. Classic translation factor GTPase family. EF-G/EF-2 subfamily.

The protein resides in the cytoplasm. In terms of biological role, catalyzes the GTP-dependent ribosomal translocation step during translation elongation. During this step, the ribosome changes from the pre-translocational (PRE) to the post-translocational (POST) state as the newly formed A-site-bound peptidyl-tRNA and P-site-bound deacylated tRNA move to the P and E sites, respectively. Catalyzes the coordinated movement of the two tRNA molecules, the mRNA and conformational changes in the ribosome. This is Elongation factor G from Rhodospirillum rubrum (strain ATCC 11170 / ATH 1.1.1 / DSM 467 / LMG 4362 / NCIMB 8255 / S1).